Reading from the N-terminus, the 177-residue chain is Large ribosomal subunit protein uL6 (177 aa).

This sequence belongs to the universal ribosomal protein uL6 family. In terms of assembly, part of the 50S ribosomal subunit.

Functionally, this protein binds to the 23S rRNA, and is important in its secondary structure. It is located near the subunit interface in the base of the L7/L12 stalk, and near the tRNA binding site of the peptidyltransferase center. In Ralstonia pickettii (strain 12J), this protein is Large ribosomal subunit protein uL6.